A 260-amino-acid polypeptide reads, in one-letter code: Apolipoprotein A-I (260 aa).

The signal sequence occupies residues 1–18 (MKFAALALALLLAVGSHA). The segment at 32–63 (ARAVLDVYLTQVKDMSLRAVNQLDDPQYAEFK) is 3 X approximate tandem repeats. 2 consecutive repeat copies span residues 64–85 (TNLA…GSVS) and 87–107 (MTDS…ESLN). Residues 64–260 (TNLAQRIEEM…EIIAASVTKS (197 aa)) are 10 X approximate tandem repeats. The stretch at 108 to 118 (VDLEALKSSLA) is one 3; half-length repeat. Repeat copies occupy residues 119 to 140 (PQNE…TLLT), 141 to 162 (PIYN…TRLE), 163 to 184 (PVME…AVLM), 185 to 206 (PMVE…EVVQ), and 207 to 225 (PYVQ…QAQT). The 9; half-length repeat unit spans residues 226 to 236 (VDTDALRTKIT). Copy 10 of the repeat occupies 237–260 (PLVEEIKVKMNAIFEIIAASVTKS).

It belongs to the apolipoprotein A1/A4/E family. As to expression, strong expression in liver with lower expression in intestine.

Its subcellular location is the secreted. Its function is as follows. Participates in the reverse transport of cholesterol from tissues to the liver for excretion by promoting cholesterol efflux from tissues and by acting as a cofactor for the lecithin cholesterol acyltransferase (LCAT). This is Apolipoprotein A-I (apoa1) from Sparus aurata (Gilthead sea bream).